The following is a 182-amino-acid chain: Probable RNA 2'-phosphotransferase (182 aa).

This sequence belongs to the KptA/TPT1 family.

Its function is as follows. Removes the 2'-phosphate from RNA via an intermediate in which the phosphate is ADP-ribosylated by NAD followed by a presumed transesterification to release the RNA and generate ADP-ribose 1''-2''-cyclic phosphate (APPR&gt;P). May function as an ADP-ribosylase. The chain is Probable RNA 2'-phosphotransferase from Flavobacterium johnsoniae (strain ATCC 17061 / DSM 2064 / JCM 8514 / BCRC 14874 / CCUG 350202 / NBRC 14942 / NCIMB 11054 / UW101) (Cytophaga johnsonae).